Reading from the N-terminus, the 743-residue chain is Phosphoribosylformylglycinamidine synthase subunit PurL (743 aa).

His-50 is a catalytic residue. The ATP site is built by Tyr-53 and Lys-92. A Mg(2+)-binding site is contributed by Glu-94. Residues Ser-95 to His-98 and Arg-117 contribute to the substrate site. The Proton acceptor role is filled by His-96. A Mg(2+)-binding site is contributed by Asp-118. A substrate-binding site is contributed by Gln-241. Asp-269 is a binding site for Mg(2+). Substrate is bound at residue Glu-313 to Gln-315. Residues Asp-495 and Gly-532 each coordinate ATP. Asn-533 is a binding site for Mg(2+). Ser-535 serves as a coordination point for substrate.

This sequence belongs to the FGAMS family. As to quaternary structure, monomer. Part of the FGAM synthase complex composed of 1 PurL, 1 PurQ and 2 PurS subunits.

The protein localises to the cytoplasm. The catalysed reaction is N(2)-formyl-N(1)-(5-phospho-beta-D-ribosyl)glycinamide + L-glutamine + ATP + H2O = 2-formamido-N(1)-(5-O-phospho-beta-D-ribosyl)acetamidine + L-glutamate + ADP + phosphate + H(+). Its pathway is purine metabolism; IMP biosynthesis via de novo pathway; 5-amino-1-(5-phospho-D-ribosyl)imidazole from N(2)-formyl-N(1)-(5-phospho-D-ribosyl)glycinamide: step 1/2. In terms of biological role, part of the phosphoribosylformylglycinamidine synthase complex involved in the purines biosynthetic pathway. Catalyzes the ATP-dependent conversion of formylglycinamide ribonucleotide (FGAR) and glutamine to yield formylglycinamidine ribonucleotide (FGAM) and glutamate. The FGAM synthase complex is composed of three subunits. PurQ produces an ammonia molecule by converting glutamine to glutamate. PurL transfers the ammonia molecule to FGAR to form FGAM in an ATP-dependent manner. PurS interacts with PurQ and PurL and is thought to assist in the transfer of the ammonia molecule from PurQ to PurL. The protein is Phosphoribosylformylglycinamidine synthase subunit PurL of Rhizobium etli (strain ATCC 51251 / DSM 11541 / JCM 21823 / NBRC 15573 / CFN 42).